We begin with the raw amino-acid sequence, 540 residues long: Glucose-6-phosphate isomerase (540 aa).

Glutamate 350 acts as the Proton donor in catalysis. Residues histidine 381 and lysine 503 contribute to the active site.

The protein belongs to the GPI family.

The protein resides in the cytoplasm. It catalyses the reaction alpha-D-glucose 6-phosphate = beta-D-fructose 6-phosphate. Its pathway is carbohydrate biosynthesis; gluconeogenesis. It participates in carbohydrate degradation; glycolysis; D-glyceraldehyde 3-phosphate and glycerone phosphate from D-glucose: step 2/4. Catalyzes the reversible isomerization of glucose-6-phosphate to fructose-6-phosphate. This Burkholderia lata (strain ATCC 17760 / DSM 23089 / LMG 22485 / NCIMB 9086 / R18194 / 383) protein is Glucose-6-phosphate isomerase.